The sequence spans 342 residues: Phosphate acyltransferase (342 aa).

The protein belongs to the PlsX family. In terms of assembly, homodimer. Probably interacts with PlsY.

The protein resides in the cytoplasm. It catalyses the reaction a fatty acyl-[ACP] + phosphate = an acyl phosphate + holo-[ACP]. It functions in the pathway lipid metabolism; phospholipid metabolism. Catalyzes the reversible formation of acyl-phosphate (acyl-PO(4)) from acyl-[acyl-carrier-protein] (acyl-ACP). This enzyme utilizes acyl-ACP as fatty acyl donor, but not acyl-CoA. This chain is Phosphate acyltransferase, found in Pelotomaculum thermopropionicum (strain DSM 13744 / JCM 10971 / SI).